Consider the following 431-residue polypeptide: Trigger factor (431 aa).

Positions 160-245 (DDRVTIDFVG…VKKVEVMVLP (86 aa)) constitute a PPIase FKBP-type domain.

Belongs to the FKBP-type PPIase family. Tig subfamily.

It localises to the cytoplasm. The enzyme catalyses [protein]-peptidylproline (omega=180) = [protein]-peptidylproline (omega=0). Its function is as follows. Involved in protein export. Acts as a chaperone by maintaining the newly synthesized protein in an open conformation. Functions as a peptidyl-prolyl cis-trans isomerase. This Mannheimia succiniciproducens (strain KCTC 0769BP / MBEL55E) protein is Trigger factor.